The sequence spans 757 residues: RNA-directed RNA polymerase catalytic subunit (757 aa).

2 consecutive short sequence motifs (nuclear localization signal) follow at residues 187–195 (RKRRVRDNM) and 203–216 (RTIG…NKRG). The interval 249–256 (RGFVYFVE) is promoter-binding site. The RdRp catalytic domain maps to 286-483 (VRKMMTNSQD…GINMSKKKSY (198 aa)).

It belongs to the influenza viruses polymerase PB1 family. Influenza RNA polymerase is composed of three subunits: PB1, PB2 and PA. Interacts (via N-terminus) with PA (via C-terminus). Interacts (via C-terminus) with PB2 (via N-terminus); this interaction is essential for transcription initiation. Interacts (via C-terminus) with human PKP2 (via N-terminus); the interaction competitively inhibits the interaction between the RNA polymerase subunits PB1 and PB2. Phosphorylated by host PRKCA.

It is found in the host nucleus. Its subcellular location is the host cytoplasm. The enzyme catalyses RNA(n) + a ribonucleoside 5'-triphosphate = RNA(n+1) + diphosphate. Its function is as follows. RNA-dependent RNA polymerase which is responsible for replication and transcription of virus RNA segments. The transcription of viral mRNAs occurs by a unique mechanism called cap-snatching. 5' methylated caps of cellular mRNAs are cleaved after 10-13 nucleotides by PA. In turn, these short capped RNAs are used as primers by PB1 for transcription of viral mRNAs. During virus replication, PB1 initiates RNA synthesis and copy vRNA into complementary RNA (cRNA) which in turn serves as a template for the production of more vRNAs. In Influenza A virus (strain A/Swine/Ontario/2/1981 H1N1), this protein is RNA-directed RNA polymerase catalytic subunit.